Consider the following 149-residue polypeptide: Small ribosomal subunit protein uS17c (149 aa).

The N-terminal 49 residues, 1 to 49, are a transit peptide targeting the chloroplast; sequence MITSSLTSSLQALKLSSPFAHGSTPLSSLSKPNSFPNHRMPALVPVIRA.

It belongs to the universal ribosomal protein uS17 family. Part of the 30S ribosomal subunit.

The protein resides in the plastid. It localises to the chloroplast. In terms of biological role, one of the primary rRNA binding proteins, it binds specifically to the 5'-end of 16S ribosomal RNA. Required for optimal plastid performance in terms of photosynthesis and growth. Required for the translation of plastid mRNAs. Plays a critical role in biosynthesis of thylakoid membrane proteins encoded by chloroplast genes. This Arabidopsis thaliana (Mouse-ear cress) protein is Small ribosomal subunit protein uS17c (RPS17).